We begin with the raw amino-acid sequence, 564 residues long: Apyrase (564 aa).

An N-terminal signal peptide occupies residues 1 to 25 (MAGKPGIQLFVIFLLLSSFAAVVWA). A divalent metal cation contacts are provided by aspartate 48, histidine 50, aspartate 99, asparagine 131, histidine 234, and histidine 258. Arginine 371 contributes to the AMP binding site. Asparagine 391 carries an N-linked (GlcNAc...) asparagine glycan. Positions 406, 425, and 515 each coordinate AMP.

The protein belongs to the 5'-nucleotidase family. It depends on a divalent metal cation as a cofactor. As to expression, female salivary gland (at protein level). Low-level expression in male tissues. Not detected in female carcasses without salivary glands.

The protein resides in the secreted. It carries out the reaction a ribonucleoside 5'-triphosphate + 2 H2O = a ribonucleoside 5'-phosphate + 2 phosphate + 2 H(+). In terms of biological role, facilitates hematophagy by inhibiting ADP-dependent platelet aggregation in the host. Cleaves adenosine triphosphate (ATP) and adenosine diphosphate (ADP) to adenosine monophosphate (AMP) and inorganic phosphate. May reduce probing time by facilitating the speed of locating blood. This chain is Apyrase, found in Aedes albopictus (Asian tiger mosquito).